The chain runs to 399 residues: Phosphoglycerate kinase (399 aa).

Substrate is bound by residues 21–23 (DFN), arginine 36, 59–62 (HLGR), arginine 120, and arginine 158. Residues lysine 209, glycine 297, glutamate 328, and 355–358 (GGDS) each bind ATP.

This sequence belongs to the phosphoglycerate kinase family. Monomer.

It is found in the cytoplasm. It carries out the reaction (2R)-3-phosphoglycerate + ATP = (2R)-3-phospho-glyceroyl phosphate + ADP. The protein operates within carbohydrate degradation; glycolysis; pyruvate from D-glyceraldehyde 3-phosphate: step 2/5. This chain is Phosphoglycerate kinase, found in Streptococcus thermophilus (strain ATCC BAA-491 / LMD-9).